The chain runs to 122 residues: Large ribosomal subunit protein uL18 (122 aa).

The interval 1 to 20 is disordered; that stretch reads MFKKVSKNANRLSRHQRVRN.

This sequence belongs to the universal ribosomal protein uL18 family. As to quaternary structure, part of the 50S ribosomal subunit; part of the 5S rRNA/L5/L18/L25 subcomplex. Contacts the 5S and 23S rRNAs.

This is one of the proteins that bind and probably mediate the attachment of the 5S RNA into the large ribosomal subunit, where it forms part of the central protuberance. This Alkaliphilus oremlandii (strain OhILAs) (Clostridium oremlandii (strain OhILAs)) protein is Large ribosomal subunit protein uL18.